The chain runs to 361 residues: Peptide chain release factor 1 (361 aa).

Residue Gln-235 is modified to N5-methylglutamine. Positions 288 to 307 (AARSADRKDQVGSGDRSERI) are disordered.

Belongs to the prokaryotic/mitochondrial release factor family. In terms of processing, methylated by PrmC. Methylation increases the termination efficiency of RF1.

The protein localises to the cytoplasm. In terms of biological role, peptide chain release factor 1 directs the termination of translation in response to the peptide chain termination codons UAG and UAA. The protein is Peptide chain release factor 1 of Nitrobacter hamburgensis (strain DSM 10229 / NCIMB 13809 / X14).